A 301-amino-acid polypeptide reads, in one-letter code: XIAP-associated factor 1 (301 aa).

A TRAF-type zinc finger spans residues Leu22 to Glu99. Residues Ile189–Asp257 form a disordered region. Over residues Ser193–Thr205 the composition is skewed to polar residues.

As to quaternary structure, interacts with BIRC4; the interaction is not detected in. Interacts with BIRC1, BIRC2, BIRC3, BIRC7 and BIRC8. Part of an complex consisting of BIRC4, XAF1 and BIRC5; the complex formation requires IFN-beta stimulation. Interacts with RNF114, the interaction increases XAF1 stability and proapoptotic effects, and may regulate IFN signaling. In terms of tissue distribution, widely expressed. Expression is frequently down-regulated in cancer cell lines. Isoform 5 is widely expressed. Expressed in placenta (at protein level).

It is found in the cytoplasm. The protein resides in the nucleus. The protein localises to the mitochondrion. Its function is as follows. Seems to function as a negative regulator of members of the IAP (inhibitor of apoptosis protein) family. Inhibits anti-caspase activity of BIRC4. Induces cleavage and inactivation of BIRC4 independent of caspase activation. Mediates TNF-alpha-induced apoptosis and is involved in apoptosis in trophoblast cells. May inhibit BIRC4 indirectly by activating the mitochondrial apoptosis pathway. After translocation to mitochondria, promotes translocation of BAX to mitochondria and cytochrome c release from mitochondria. Seems to promote the redistribution of BIRC4 from the cytoplasm to the nucleus, probably independent of BIRC4 inactivation which seems to occur in the cytoplasm. The BIRC4-XAF1 complex mediates down-regulation of BIRC5/survivin; the process requires the E3 ligase activity of BIRC4. Seems to be involved in cellular sensitivity to the proapoptotic actions of TRAIL. May be a tumor suppressor by mediating apoptosis resistance of cancer cells. This chain is XIAP-associated factor 1 (XAF1), found in Homo sapiens (Human).